The chain runs to 399 residues: uncharacterized protein (399 aa).

Topologically, residues 1-8 (MHNLQVRR) are cytoplasmic. The helical transmembrane segment at 9–35 (HYAALKGFYLFAFLGTGSIIPLLSMYL) threads the bilayer. Residues 36 to 42 (TKEQHLS) lie on the Extracellular side of the membrane. The helical transmembrane segment at 43–71 (GSQVGLIMSLGPIVMIFFQPFWGMLSDYT) threads the bilayer. Over 72-75 (QKTK) the chain is Cytoplasmic. The chain crosses the membrane as a helical span at residues 76-101 (GLLAVCTSITGIIGLAYIAFDSFPLF). Residues 102–105 (ILIA) are Extracellular-facing. The helical transmembrane segment at 106 to 123 (ACFAAFQSTIIPLSDSIS) threads the bilayer. The Cytoplasmic portion of the chain corresponds to 124–134 (LRYTQETNGNY). Residues 135–157 (GGIRLFGSLGFGVAVFAMGQVTN) form a helical membrane-spanning segment. Residues 158–160 (QLY) lie on the Extracellular side of the membrane. The chain crosses the membrane as a helical span at residues 161 to 180 (PIHVIFIFGCAFLCIAAILA). Over 181–210 (SQVPGQQKTTKVNIRKGFRELISNKTFLIF) the chain is Cytoplasmic. A helical transmembrane segment spans residues 211–230 (MIITFTTFAPNLANNTYFSL). Topologically, residues 231 to 234 (FLDK) are extracellular. Residues 235-259 (SGASLSAIGILFFIGVISEIPFMRF) form a helical membrane-spanning segment. The Cytoplasmic segment spans residues 260 to 269 (AQTFIDKMGL). A helical membrane pass occupies residues 270–289 (LNVIMLSGGVSLFRWALYFT). The Extracellular portion of the chain corresponds to 290-292 (APS). A helical membrane pass occupies residues 293-315 (LWIIYATVFLQGVAIGLFIPAAL). Topologically, residues 316-327 (QYVKKITPRHVE) are cytoplasmic. Residues 328 to 355 (ATALTMYAAIGNGFGNWFCTFAGGYIFD) form a helical membrane-spanning segment. Residues 356–358 (YVS) lie on the Extracellular side of the membrane. The chain crosses the membrane as a helical span at residues 359–379 (IFAVYLLFGILSIAGFGLTLY). Over 380 to 399 (LMKAEKNKHTLHQPAVTFKP) the chain is Cytoplasmic.

Belongs to the major facilitator superfamily.

It is found in the cell membrane. This is an uncharacterized protein from Bacillus subtilis (strain 168).